Consider the following 459-residue polypeptide: MNRLPSSASALACSAHALNLIEKRTLDHEEMKALNQEVREYFKEHVNPGFLEYRKSVTAGGDYGAVEWQAGGLNTLVDTQGQEFIDCLGGFGIFNVGHRNPVVVSAVENQLAKQPLHSQELLDPLRAMLAKTLAALTPGKLKYSFFCNSGTESVEAAIKLAKAYQSPRGKFTFIATSGAFHGKSLGALSATAKSTFRKPFMPLLPGFRHVPFGDINAMRTMLSECKKTGDDVAAVILEPIQGEGGVILPPTGYLPAVRKLCDEFGALLILDEVQTGMGRTGKMFACEHENVQPDILCLAKALGGGVMPIGATVATEEVFSVLFDNPFLHTTTFGGNPLACAAALATINVLLTQNLPAQAAQKGDMLLDGFRLLAQEYPDLVNEVRGKGMLMAIEFVDNEIGYDFASEMFRQRVLVAGTLNNAKTIRIEPPLTLTLEQCEQVLKAARKALAALRVSVEEA.

Pyridoxal 5'-phosphate-binding positions include 150 to 151 and glutamine 274; that span reads GT. N6-(pyridoxal phosphate)lysine is present on lysine 300. A pyridoxal 5'-phosphate-binding site is contributed by threonine 332.

It belongs to the class-III pyridoxal-phosphate-dependent aminotransferase family. Putrescine aminotransferase subfamily. Requires pyridoxal 5'-phosphate as cofactor.

It catalyses the reaction an alkane-alpha,omega-diamine + 2-oxoglutarate = an omega-aminoaldehyde + L-glutamate. It carries out the reaction putrescine + 2-oxoglutarate = 1-pyrroline + L-glutamate + H2O. The enzyme catalyses cadaverine + 2-oxoglutarate = 5-aminopentanal + L-glutamate. It functions in the pathway amine and polyamine degradation; putrescine degradation; 4-aminobutanal from putrescine (transaminase route): step 1/1. Its function is as follows. Catalyzes the aminotransferase reaction from putrescine to 2-oxoglutarate, leading to glutamate and 4-aminobutanal, which spontaneously cyclizes to form 1-pyrroline. This is the first step in one of two pathways for putrescine degradation, where putrescine is converted into 4-aminobutanoate (gamma-aminobutyrate or GABA) via 4-aminobutanal. Also functions as a cadaverine transaminase in a a L-lysine degradation pathway to succinate that proceeds via cadaverine, glutarate and L-2-hydroxyglutarate. The protein is Putrescine aminotransferase of Klebsiella pneumoniae subsp. pneumoniae (strain ATCC 700721 / MGH 78578).